The following is a 535-amino-acid chain: Dual specificity calcium/calmodulin-dependent 3',5'-cyclic nucleotide phosphodiesterase 1B (535 aa).

Residues methionine 1–glutamate 21 are disordered. Residues serine 7 and serine 14 each carry the phosphoserine modification. Calmodulin-binding stretches follow at residues proline 26–glutamate 46 and glutamate 117–arginine 140. The PDEase domain maps to valine 145–glycine 502. Histidine 222 (proton donor) is an active-site residue. The Zn(2+) site is built by histidine 226, histidine 262, aspartate 263, and aspartate 369. Residue aspartate 263 coordinates Mg(2+). Disordered stretches follow at residues proline 445–asparagine 474 and tryptophan 495–aspartate 535. Polar residues predominate over residues lysine 454–glutamine 463. Residues serine 465 and serine 513 each carry the phosphoserine modification.

Belongs to the cyclic nucleotide phosphodiesterase family. PDE1 subfamily. As to quaternary structure, homodimer. Requires Zn(2+) as cofactor. The cofactor is Mg(2+).

The protein resides in the cytoplasm. The protein localises to the cytosol. The enzyme catalyses a nucleoside 3',5'-cyclic phosphate + H2O = a nucleoside 5'-phosphate + H(+). It carries out the reaction 3',5'-cyclic GMP + H2O = GMP + H(+). It catalyses the reaction 3',5'-cyclic AMP + H2O = AMP + H(+). With respect to regulation, type I PDE are activated by the binding of calmodulin in the presence of Ca(2+). Its function is as follows. Cyclic nucleotide phosphodiesterase with a dual specificity for the second messengers cAMP and cGMP, which are key regulators of many important physiological processes. Has a preference for cGMP as a substrate. The chain is Dual specificity calcium/calmodulin-dependent 3',5'-cyclic nucleotide phosphodiesterase 1B from Cricetulus griseus (Chinese hamster).